We begin with the raw amino-acid sequence, 182 residues long: Large ribosomal subunit protein uL10 (182 aa).

It belongs to the universal ribosomal protein uL10 family. Part of the ribosomal stalk of the 50S ribosomal subunit. The N-terminus interacts with L11 and the large rRNA to form the base of the stalk. The C-terminus forms an elongated spine to which L12 dimers bind in a sequential fashion forming a multimeric L10(L12)X complex.

Forms part of the ribosomal stalk, playing a central role in the interaction of the ribosome with GTP-bound translation factors. This Parafrankia sp. (strain EAN1pec) protein is Large ribosomal subunit protein uL10.